The chain runs to 103 residues: N(4)-acetylcytidine amidohydrolase (103 aa).

In terms of domain architecture, ASCH spans 6–101; sequence ITFFQRFQDD…QIQFYVIEFK (96 aa). Residue lysine 21 is the Proton acceptor of the active site. The active-site Nucleophile is the threonine 24. Glutamate 74 functions as the Proton donor in the catalytic mechanism.

It belongs to the N(4)-acetylcytidine amidohydrolase family.

It catalyses the reaction N(4)-acetylcytidine + H2O = cytidine + acetate + H(+). It carries out the reaction N(4)-acetyl-2'-deoxycytidine + H2O = 2'-deoxycytidine + acetate + H(+). The enzyme catalyses N(4)-acetylcytosine + H2O = cytosine + acetate + H(+). In terms of biological role, catalyzes the hydrolysis of N(4)-acetylcytidine (ac4C). In Escherichia coli (strain SMS-3-5 / SECEC), this protein is N(4)-acetylcytidine amidohydrolase (yqfB).